The following is a 283-amino-acid chain: MAESSSPSPTEEIVRLIKRLSAYVAFKMSSLFSTTSIRNLDSRSIGAIAGLAIAVIFTWRAIRTPGEQRQRRQPKRRIHNAETSSAAAAASQSNLASSVAPEVSSPREDNAVQDVVDQFFQPVKPTLGQIVRQKLSEGRKVTCRLLGVILEETSPEELQKQATVRSSVLEVLLEITKYSDLYLMERVLDDESEAKVLQALENAGVFTSGGLVKDKVLFCSTEIGRTSFVRQLEPDWHIDTNPEISTQLARFIKYQLHVATVKPERTAPNVFTSQSIEQFFGSV.

Alanine 2 carries the N-acetylalanine modification. The chain crosses the membrane as a helical span at residues 45–62 (IGAIAGLAIAVIFTWRAI). A disordered region spans residues 66–107 (GEQRQRRQPKRRIHNAETSSAAAAASQSNLASSVAPEVSSPR). Residues 81–100 (AETSSAAAAASQSNLASSVA) show a composition bias toward low complexity.

It belongs to the peroxin-22 family. In terms of assembly, interacts with PEX4.

It localises to the peroxisome membrane. May be tethered PEX4 to the peroxisome membrane and may be involved in a late step of the matrix protein import. Does not play a role in the biogenesis of the peroxisomal membrane. The polypeptide is Peroxisome biogenesis protein 22 (PEX22) (Arabidopsis thaliana (Mouse-ear cress)).